The following is a 382-amino-acid chain: Apolipoprotein A-IV (382 aa).

A signal peptide spans 1-20 (MFLKAVVLTLSLVAVTGAQA). Tandem repeats lie at residues 33-54 (DYFS…KSEL), 60-81 (ALFQ…KKLV), 82-103 (PFAT…EEIR), 115-136 (PHAD…QRLG), 137-158 (PYAE…NQLT), 159-180 (AHAQ…ASLT), 181-202 (PYAD…GHLT), 203-224 (PYAD…RSLA), 225-246 (PYAQ…FQMK), 247-268 (KNAE…QKLV), 269-286 (PVAE…EELQ), 287-308 (KSLA…RNVG), and 309-330 (PYGE…QKLG). Residues 33–330 (DYFSQLSNNA…QVEELRQKLG (298 aa)) are 13 X 22 AA approximate tandem repeats.

Belongs to the apolipoprotein A1/A4/E family. Homodimer. Phosphorylation sites are present in the extracellular medium.

The protein resides in the secreted. Functionally, may have a role in chylomicrons and VLDL secretion and catabolism. Required for efficient activation of lipoprotein lipase by ApoC-II; potent activator of LCAT. Apoa-IV is a major component of HDL and chylomicrons. The sequence is that of Apolipoprotein A-IV (APOA4) from Neomonachus schauinslandi (Hawaiian monk seal).